A 351-amino-acid chain; its full sequence is Anaerobic nitrite reductase Glb1-2 (351 aa).

2 consecutive Globin domains span residues 13–162 and 184–333; these read DFTE…VEMK and CFTE…AEMK. Heme b is bound by residues S56, K70, H74, K104, T108, H109, S227, K241, H245, K275, T279, and H280. The tract at residues 331-351 is disordered; it reads EMKKTDHDHQTNVEDKSKPSS.

Belongs to the plant globin family. As to quaternary structure, monomer. It depends on heme b as a cofactor. As to expression, predominantly expressed in nodules and roots, and, to a lesser extent, in leaves, at low levels in pods, but barely in stems, petioles, buds and flowers. Mainly expressed in nodules and roots at low levels, and barely in leaves. In terms of tissue distribution, expressed at very low levels in nodules, roots and pods.

Its subcellular location is the cytoplasm. The protein resides in the nucleus. The catalysed reaction is Fe(III)-heme b-[protein] + nitric oxide + H2O = Fe(II)-heme b-[protein] + nitrite + 2 H(+). Functionally, phytoglobin that regulates the fine tuning of nitric oxide (NO) concentration in the cytosol in response to sudden changes in O(2) availability, and performs both symbiotic and nonsymbiotic functions. Exhibits NO dioxygenase activity in the presence of O(2) but nitrite reductase (NiR) activity in the absence of O(2) (e.g. during flooding or in waterlogged soil). May not function as an oxygen storage or transport protein. Extremely reactive toward the physiological ligands O(2), nitric oxide (NO), and nitrite with a very high affinity for O(2) through an hexacoordinate heme iron because of a very low dissociation constant. In terms of biological role, very high affinity for O(2) through two hexacoordinate heme irons. Extremely reactive toward the physiological ligands O(2), nitric oxide (NO), and nitrite. Very high affinity for O(2) through a single hexacoordinate heme iron. Extremely reactive toward the physiological ligands O(2), nitric oxide (NO), and nitrite. The chain is Anaerobic nitrite reductase Glb1-2 from Medicago truncatula (Barrel medic).